The following is a 116-amino-acid chain: Neuropeptide Y receptor type 1 (116 aa).

The chain crosses the membrane as a helical span at residues 1-6; it reads LVLIAV. The Cytoplasmic segment spans residues 7 to 24; that stretch reads ERHQLIINPRGWRPSNRH. Residues 25 to 45 traverse the membrane as a helical segment; sequence AYVGIAVIWVLAVASSLPFLI. The Extracellular portion of the chain corresponds to 46-81; sequence YQVLTDEPFQNVTLDAFKDKYVCFDKFPSDSHRLSY. Asn56 carries an N-linked (GlcNAc...) asparagine glycan. The helical transmembrane segment at 82–102 threads the bilayer; that stretch reads TTLLLVLQYFGPLCFIFICYF. Topologically, residues 103–116 are cytoplasmic; that stretch reads KIYIRLKRRNNMMD.

This sequence belongs to the G-protein coupled receptor 1 family.

The protein resides in the cell membrane. Its function is as follows. Receptor for neuropeptide Y and peptide YY. The protein is Neuropeptide Y receptor type 1 (NPY1R) of Ovis aries (Sheep).